The primary structure comprises 355 residues: MACINGENRDFSSSSSLSSLPMIVSRNFSARDDGETGDEFPFERIFPVYARGTLNPVADPVLLDFTNSSYDPIWDSIREEAKLEAEEEPVLSSFLYASILSHDCLEQALSFVLANRLQNPTLLATQLMDIFCNVMVHDRGIQSSIRLDVQAFKDRDPACLSYSSAILHLKGYLALQAYRVAHKLWKQGRKLLALALQSRVSEVFGIDIHPAARIGKGILLDHGTGVVIGETAVIGDRVSILHGVTLGGTGKETGDRHPNIGDGALLGACVTILGNIKIGAGAMVAAGSLVLKDVPSHSMVAGNPAKLIGFVDEQDPSMTMEHDATREFFQNVAVAYRETIPNGSSVSGSCRERRH.

Belongs to the transferase hexapeptide repeat family. As to quaternary structure, homomultimer. Localized in vascular tissues, particularly in phloem.

It localises to the cytoplasm. The enzyme catalyses L-serine + acetyl-CoA = O-acetyl-L-serine + CoA. It participates in amino-acid biosynthesis; L-cysteine biosynthesis; L-cysteine from L-serine: step 1/2. Feedback inhibitions by L-Ser and acetyl-CoA. The sequence is that of Serine acetyltransferase 4 from Arabidopsis thaliana (Mouse-ear cress).